Consider the following 127-residue polypeptide: MFNKQTNAIVLLFTFALFATLAVATPTIVARTGGSGSSCPTTDIKCCSHVGTFSEVQGYIDDDTKVKLIPALLGLLGATIDVVLGVVLGVTCSSISVGSSCSATTVCCENVVFNGLINVGCTAIDIL.

The first 24 residues, 1–24 (MFNKQTNAIVLLFTFALFATLAVA), serve as a signal peptide directing secretion. 4 disulfide bridges follow: C39–C107, C46–C101, C47–C92, and C108–C121.

The protein belongs to the fungal hydrophobin family. As to quaternary structure, self-assembles to form functional amyloid fibrils called rodlets. Self-assembly into fibrillar rodlets occurs spontaneously at hydrophobic:hydrophilic interfaces and the rodlets further associate laterally to form amphipathic monolayers.

Its subcellular location is the secreted. The protein localises to the cell wall. Its function is as follows. Aerial growth, conidiation, and dispersal of filamentous fungi in the environment rely upon a capability of their secreting small amphipathic proteins called hydrophobins (HPBs) with low sequence identity. Class I can self-assemble into an outermost layer of rodlet bundles on aerial cell surfaces, conferring cellular hydrophobicity that supports fungal growth, development and dispersal; whereas Class II form highly ordered films at water-air interfaces through intermolecular interactions but contribute nothing to the rodlet structure. This chain is Unclassified hydrophobin 5, found in Pleurotus ostreatus (strain PC15) (Oyster mushroom).